Consider the following 173-residue polypeptide: NADH-ubiquinone oxidoreductase chain 6 (173 aa).

Helical transmembrane passes span 1–21 (MAYI…SVAS), 25–45 (PYFA…VLMG), 53–73 (LVLF…CAAL), 87–107 (VLGS…WFWG), and 139–159 (LGGG…LVVL).

The protein belongs to the complex I subunit 6 family.

The protein localises to the mitochondrion membrane. The catalysed reaction is a ubiquinone + NADH + 5 H(+)(in) = a ubiquinol + NAD(+) + 4 H(+)(out). Its function is as follows. Core subunit of the mitochondrial membrane respiratory chain NADH dehydrogenase (Complex I) that is believed to belong to the minimal assembly required for catalysis. Complex I functions in the transfer of electrons from NADH to the respiratory chain. The immediate electron acceptor for the enzyme is believed to be ubiquinone. The sequence is that of NADH-ubiquinone oxidoreductase chain 6 (MT-ND6) from Gadus morhua (Atlantic cod).